The primary structure comprises 45 residues: Large ribosomal subunit protein bL34 (45 aa).

Residues 1 to 45 (MTKRTFGGTSRKRKRVSGFRVRMRSHTGRRVIKSRRKRGRDRIAV) are disordered. Positions 10–45 (SRKRKRVSGFRVRMRSHTGRRVIKSRRKRGRDRIAV) are enriched in basic residues.

This sequence belongs to the bacterial ribosomal protein bL34 family.

This Prochlorococcus marinus (strain MIT 9515) protein is Large ribosomal subunit protein bL34.